Consider the following 457-residue polypeptide: Aromatic amino acid transport protein AroP (457 aa).

Over 1 to 19 the chain is Cytoplasmic; that stretch reads MMEGQQHGEQLKRGLKNRH. A helical membrane pass occupies residues 20-40; sequence IQLIALGGAIGTGLFLGSASV. The Periplasmic segment spans residues 41-42; it reads IQ. Residues 43–63 form a helical membrane-spanning segment; the sequence is SAGPGIILGYAIAGFIAFLIM. Topologically, residues 64–86 are cytoplasmic; the sequence is RQLGEMVVEEPVAGSFSHFAYKY. The chain crosses the membrane as a helical span at residues 87-107; the sequence is WGSFAGFASGWNYWVLYVLVA. Residues 108 to 117 lie on the Periplasmic side of the membrane; the sequence is MAELTAVGKY. Residues 118–138 form a helical membrane-spanning segment; the sequence is IQFWYPEIPTWVSAAVFFVVI. Topologically, residues 139 to 155 are cytoplasmic; it reads NAINLTNVTVFGEMEFW. A helical transmembrane segment spans residues 156 to 176; sequence FAIIKVIAVVAMIIFGGWLLF. The Periplasmic segment spans residues 177–201; the sequence is SGNGGPQASVSNLWDQGGFLPHGFT. A helical transmembrane segment spans residues 202 to 222; the sequence is GLVMMMAIIMFSFGGLELVGI. Residues 223–240 lie on the Cytoplasmic side of the membrane; that stretch reads TAAEADNPEQSIPKATNQ. The helical transmembrane segment at 241-261 threads the bilayer; that stretch reads VIYRILIFYIGSLAVLLSLMP. Topologically, residues 262–271 are periplasmic; it reads WTRVTADTSP. The helical transmembrane segment at 272–292 threads the bilayer; sequence FVLIFHELGDTFVANALNIVV. Residues 293–333 are Cytoplasmic-facing; it reads LTAALSVYNSCVYCNSRMLFGLAQQGNAPKALASVDKRGVP. The chain crosses the membrane as a helical span at residues 334-354; the sequence is VNTILVSALVTALCVLINYLA. Residues 355–358 lie on the Periplasmic side of the membrane; it reads PESA. Residues 359-379 traverse the membrane as a helical segment; that stretch reads FGLLMALVVSALVINWAMISL. Topologically, residues 380–407 are cytoplasmic; it reads AHMKFRRAKQEQGVVTRFPALLYPLGNW. A helical transmembrane segment spans residues 408 to 428; sequence ICLLFMAVVLVIMLMTPGMAI. S429 is a topological domain (periplasmic). A helical membrane pass occupies residues 430–450; that stretch reads VYLIPVWLVVLGIGYLFKEKT. The Cytoplasmic portion of the chain corresponds to 451 to 457; it reads AKAVKAH.

It belongs to the amino acid-polyamine-organocation (APC) superfamily. Amino acid transporter (AAT) (TC 2.A.3.1) family.

It localises to the cell inner membrane. The enzyme catalyses L-phenylalanine(in) + H(+)(in) = L-phenylalanine(out) + H(+)(out). The catalysed reaction is L-tryptophan(in) + H(+)(in) = L-tryptophan(out) + H(+)(out). It catalyses the reaction L-tyrosine(in) + H(+)(in) = L-tyrosine(out) + H(+)(out). Its function is as follows. Permease that is involved in the active transport across the cytoplasmic membrane of all three aromatic amino acids, phenylalanine, tyrosine and tryptophan. The protein is Aromatic amino acid transport protein AroP (aroP) of Escherichia coli O157:H7.